We begin with the raw amino-acid sequence, 202 residues long: Orotate phosphoribosyltransferase (202 aa).

5-phospho-alpha-D-ribose 1-diphosphate is bound by residues K93 and 113-121 (EDIITTGGS). 2 residues coordinate orotate: T117 and R145.

Belongs to the purine/pyrimidine phosphoribosyltransferase family. PyrE subfamily. As to quaternary structure, homodimer. Requires Mg(2+) as cofactor.

It carries out the reaction orotidine 5'-phosphate + diphosphate = orotate + 5-phospho-alpha-D-ribose 1-diphosphate. Its pathway is pyrimidine metabolism; UMP biosynthesis via de novo pathway; UMP from orotate: step 1/2. Functionally, catalyzes the transfer of a ribosyl phosphate group from 5-phosphoribose 1-diphosphate to orotate, leading to the formation of orotidine monophosphate (OMP). The protein is Orotate phosphoribosyltransferase of Campylobacter jejuni subsp. jejuni serotype O:23/36 (strain 81-176).